A 254-amino-acid chain; its full sequence is Myeloblastin (254 aa).

The first 27 residues, 1–27, serve as a signal peptide directing secretion; sequence MSGSYPSPKGIHPFLLLALVVGGAVQA. Residues 28-29 constitute a propeptide that is removed on maturation; the sequence is SK. The region spanning 30-250 is the Peptidase S1 domain; that stretch reads IVGGHEARPH…YVDWIQNVLR (221 aa). A disulfide bridge links cysteine 58 with cysteine 74. Catalysis depends on charge relay system residues histidine 73 and aspartate 120. Asparagine 127 and asparagine 176 each carry an N-linked (GlcNAc...) asparagine glycan. Intrachain disulfides connect cysteine 154–cysteine 211, cysteine 184–cysteine 190, and cysteine 201–cysteine 226. The active-site Charge relay system is the serine 205. Positions 251–254 are excised as a propeptide; sequence GAEP.

Belongs to the peptidase S1 family. Elastase subfamily. In terms of assembly, may form dimers. Interacts with CD177; the interaction tethers PRTN3 to the cell surface; the interaction is direct. Interacts with SERPINB1. Interacts with ADGRG3.

It is found in the lysosome. It localises to the secreted. The protein localises to the cell membrane. Its subcellular location is the membrane raft. It carries out the reaction Hydrolysis of proteins, including elastin, by preferential cleavage: -Ala-|-Xaa- &gt; -Val-|-Xaa-.. Serine protease that degrades elastin, fibronectin, laminin, vitronectin, and collagen types I, III, and IV (in vitro). By cleaving and activating receptor F2RL1/PAR-2, enhances endothelial cell barrier function and thus vascular integrity during neutrophil transendothelial migration. May play a role in neutrophil transendothelial migration, probably when associated with CD177. Triggers inflammatory processes in neutrophils by interacting with ADGRG3 upstream of F2RL1/PAR2 activation. The chain is Myeloblastin (Prtn3) from Mus musculus (Mouse).